Consider the following 345-residue polypeptide: Myb/SANT-like DNA-binding domain-containing protein 4 (345 aa).

Residues Leu-4–Arg-77 enclose the Myb-like domain. Lys-9 participates in a covalent cross-link: Glycyl lysine isopeptide (Lys-Gly) (interchain with G-Cter in SUMO2). Position 106 is a phosphoserine (Ser-106). Glycyl lysine isopeptide (Lys-Gly) (interchain with G-Cter in SUMO2) cross-links involve residues Lys-114 and Lys-142. Positions Val-141–Asn-175 are disordered. A Phosphothreonine modification is found at Thr-188. Positions His-202 to Leu-344 form a coiled coil. Residues Lys-237, Lys-254, and Lys-273 each participate in a glycyl lysine isopeptide (Lys-Gly) (interchain with G-Cter in SUMO2) cross-link.

This chain is Myb/SANT-like DNA-binding domain-containing protein 4 (Msantd4), found in Rattus norvegicus (Rat).